We begin with the raw amino-acid sequence, 284 residues long: Diaminopimelate epimerase (284 aa).

Positions 13 and 70 each coordinate substrate. Cysteine 79 acts as the Proton donor in catalysis. Substrate contacts are provided by residues 80 to 81 (GN), asparagine 167, asparagine 200, and 218 to 219 (ER). Catalysis depends on cysteine 227, which acts as the Proton acceptor. 228-229 (GT) is a binding site for substrate.

This sequence belongs to the diaminopimelate epimerase family. Homodimer.

Its subcellular location is the cytoplasm. The enzyme catalyses (2S,6S)-2,6-diaminopimelate = meso-2,6-diaminopimelate. It functions in the pathway amino-acid biosynthesis; L-lysine biosynthesis via DAP pathway; DL-2,6-diaminopimelate from LL-2,6-diaminopimelate: step 1/1. Functionally, catalyzes the stereoinversion of LL-2,6-diaminopimelate (L,L-DAP) to meso-diaminopimelate (meso-DAP), a precursor of L-lysine and an essential component of the bacterial peptidoglycan. The chain is Diaminopimelate epimerase from Prochlorococcus marinus (strain NATL2A).